We begin with the raw amino-acid sequence, 324 residues long: Protoheme IX farnesyltransferase (324 aa).

A run of 9 helical transmembrane segments spans residues 31–51, 56–76, 105–125, 126–146, 153–173, 181–201, 214–234, 238–258, and 285–305; these read LILLFLITTAAAMWVASSGQV, FLTTLLAGACAAGSANTINCI, VFAASLALTAFFLLAFGANLL, SACLAMAGIAVYIGVYTYWLK, IVIGGAAGAIPPLVGWAAVTG, VLFAIIFIWTPPHFWPLAMMI, PVVNGMATTANQTFIYTLLLL, LLLVYPLKVSGALYASIAIVL, and FSILYMMLLCAGMGVDSLPWT.

This sequence belongs to the UbiA prenyltransferase family. Protoheme IX farnesyltransferase subfamily.

The protein resides in the cell inner membrane. It carries out the reaction heme b + (2E,6E)-farnesyl diphosphate + H2O = Fe(II)-heme o + diphosphate. It functions in the pathway porphyrin-containing compound metabolism; heme O biosynthesis; heme O from protoheme: step 1/1. Converts heme B (protoheme IX) to heme O by substitution of the vinyl group on carbon 2 of heme B porphyrin ring with a hydroxyethyl farnesyl side group. The chain is Protoheme IX farnesyltransferase from Acaryochloris marina (strain MBIC 11017).